The following is a 444-amino-acid chain: Elongation factor 1-alpha (444 aa).

One can recognise a tr-type G domain in the interval 15–236 (KPHINLAVVG…VLDTFQPPPR (222 aa)). The tract at residues 24–31 (GHVDNGKS) is G1. Residue 24-31 (GHVDNGKS) coordinates GTP. Mg(2+) is bound at residue S31. The tract at residues 80-84 (GVTIE) is G2. Positions 101–104 (DLPG) are G3. GTP contacts are provided by residues 101 to 105 (DLPGH) and 163 to 166 (NKMD). The G4 stretch occupies residues 163–166 (NKMD). Positions 202–204 (SAI) are G5.

This sequence belongs to the TRAFAC class translation factor GTPase superfamily. Classic translation factor GTPase family. EF-Tu/EF-1A subfamily.

The protein localises to the cytoplasm. It carries out the reaction GTP + H2O = GDP + phosphate + H(+). In terms of biological role, GTP hydrolase that promotes the GTP-dependent binding of aminoacyl-tRNA to the A-site of ribosomes during protein biosynthesis. This is Elongation factor 1-alpha from Pyrobaculum calidifontis (strain DSM 21063 / JCM 11548 / VA1).